Reading from the N-terminus, the 202-residue chain is P25 protein (202 aa).

The 189-residue stretch at 7 to 195 (VAIVIYSTYG…EIARIQGETF (189 aa)) folds into the Flavodoxin-like domain. Ser-181 bears the Phosphoserine mark.

This sequence belongs to the WrbA family. As to quaternary structure, homodimer.

Its function is as follows. Unknown. Target of pap1 transcription factor. Confers brefeldin A resistance in S.pombe. The polypeptide is P25 protein (obr1) (Schizosaccharomyces pombe (strain 972 / ATCC 24843) (Fission yeast)).